A 184-amino-acid chain; its full sequence is MSYGCQVSDDEPNGSKAVSLLLRLSTLALALTSAVVMATASECTVVQLNGVVATITYKDFPPFVYLVGFNIAAAMLEAAAIYLRLSTGGGDDDDEGFKGKLPGILLVVIDVAVQALVYTATGGAFAAVSAYGPQINACGAGAGRFCGQVHQSKLLSFAGSAAVGLAVVFRDVSLPFSLWPTSSD.

The Cytoplasmic portion of the chain corresponds to Met1–Lys16. Residues Ala17–Met37 form a helical membrane-spanning segment. Topologically, residues Ala38–Pro62 are extracellular. The chain crosses the membrane as a helical span at residues Phe63 to Leu83. Topologically, residues Arg84 to Lys100 are cytoplasmic. A helical transmembrane segment spans residues Leu101–Thr121. The Extracellular segment spans residues Gly122–Lys153. A helical membrane pass occupies residues Leu154 to Leu174. Residues Pro175–Asp184 are Cytoplasmic-facing.

It belongs to the Casparian strip membrane proteins (CASP) family. In terms of assembly, homodimer and heterodimers.

The protein resides in the cell membrane. The chain is CASP-like protein 1U2 from Oryza sativa subsp. japonica (Rice).